The following is a 457-amino-acid chain: Bifunctional protein GlmU (457 aa).

The pyrophosphorylase stretch occupies residues 1-232 (MNNLAAVILA…PAEVMGINDR (232 aa)). Residues 9 to 12 (LAAG), Lys-23, Gln-75, and 80 to 81 (GT) each bind UDP-N-acetyl-alpha-D-glucosamine. Asp-105 lines the Mg(2+) pocket. UDP-N-acetyl-alpha-D-glucosamine is bound by residues Gly-142, Glu-157, Asn-172, and Asn-230. A Mg(2+)-binding site is contributed by Asn-230. The segment at 233 to 253 (AQLAEAGQLLRGRINKALMLD) is linker. Residues 254–457 (GTTLIDPQTT…NKEGWKLKKK (204 aa)) are N-acetyltransferase. UDP-N-acetyl-alpha-D-glucosamine-binding residues include Arg-336 and Lys-354. His-366 (proton acceptor) is an active-site residue. Tyr-369 and Asn-380 together coordinate UDP-N-acetyl-alpha-D-glucosamine. Residues 389 to 390 (NY), Ser-408, Ala-426, and Arg-443 each bind acetyl-CoA.

It in the N-terminal section; belongs to the N-acetylglucosamine-1-phosphate uridyltransferase family. The protein in the C-terminal section; belongs to the transferase hexapeptide repeat family. As to quaternary structure, homotrimer. The cofactor is Mg(2+).

The protein resides in the cytoplasm. The enzyme catalyses alpha-D-glucosamine 1-phosphate + acetyl-CoA = N-acetyl-alpha-D-glucosamine 1-phosphate + CoA + H(+). The catalysed reaction is N-acetyl-alpha-D-glucosamine 1-phosphate + UTP + H(+) = UDP-N-acetyl-alpha-D-glucosamine + diphosphate. It participates in nucleotide-sugar biosynthesis; UDP-N-acetyl-alpha-D-glucosamine biosynthesis; N-acetyl-alpha-D-glucosamine 1-phosphate from alpha-D-glucosamine 6-phosphate (route II): step 2/2. Its pathway is nucleotide-sugar biosynthesis; UDP-N-acetyl-alpha-D-glucosamine biosynthesis; UDP-N-acetyl-alpha-D-glucosamine from N-acetyl-alpha-D-glucosamine 1-phosphate: step 1/1. It functions in the pathway bacterial outer membrane biogenesis; LPS lipid A biosynthesis. Functionally, catalyzes the last two sequential reactions in the de novo biosynthetic pathway for UDP-N-acetylglucosamine (UDP-GlcNAc). The C-terminal domain catalyzes the transfer of acetyl group from acetyl coenzyme A to glucosamine-1-phosphate (GlcN-1-P) to produce N-acetylglucosamine-1-phosphate (GlcNAc-1-P), which is converted into UDP-GlcNAc by the transfer of uridine 5-monophosphate (from uridine 5-triphosphate), a reaction catalyzed by the N-terminal domain. The polypeptide is Bifunctional protein GlmU (Geotalea uraniireducens (strain Rf4) (Geobacter uraniireducens)).